Here is a 216-residue protein sequence, read N- to C-terminus: MTIVHFVGSLFFFFFFSYIFFYNDHGLYTWGCNFAMESPSPTSSPSLPTRFTPCPVAVLPSSSSPSWSFSTSCMPESTCSEISTSFFDTFNSSSDLFRSRICLLSDNRSFSIFSDSFTYFSFSISSCVSRSHSFVNLLSNFSMVSLTNSWIIAWLSSMYFSEISLDLSETLPNLSSPCSSVWTASFTHSINFEPDTLPSRLSPPLPFSVEPTTSRM.

The helical transmembrane segment at 1–21 threads the bilayer; that stretch reads MTIVHFVGSLFFFFFFSYIFF.

The protein resides in the membrane. This is an uncharacterized protein from Saccharomyces cerevisiae (strain ATCC 204508 / S288c) (Baker's yeast).